We begin with the raw amino-acid sequence, 149 residues long: Oligosaccharyltransferase complex subunit OSTC (149 aa).

The Cytoplasmic portion of the chain corresponds to 1 to 32 (METLFRLPFAVLECPNIKLKRPGWVHMPSAMT). A helical membrane pass occupies residues 33–53 (VYALVVVSYFLITGGIIYDVI). The Extracellular portion of the chain corresponds to 54-83 (VEPPSVGSMTDEHGHQRPVAFLAYRVNGQY). Residues 84-104 (IMEGLASSFLFTMGGLGFIIL) traverse the membrane as a helical segment. The Cytoplasmic segment spans residues 105–117 (DRSNAPNIPKLNR). Residues 118-138 (FLLLFIGFVSVLLSFFMARVF) form a helical membrane-spanning segment. At 139–149 (MRMKLPGYLMG) the chain is on the extracellular side.

Belongs to the OSTC family. As to quaternary structure, specific component of the STT3A-containing form of the oligosaccharyltransferase (OST) complex.

It localises to the membrane. It functions in the pathway protein modification; protein glycosylation. Specific component of the STT3A-containing form of the oligosaccharyl transferase (OST) complex that catalyzes the initial transfer of a defined glycan (Glc(3)Man(9)GlcNAc(2) in eukaryotes) from the lipid carrier dolichol-pyrophosphate to an asparagine residue within an Asn-X-Ser/Thr consensus motif in nascent polypeptide chains, the first step in protein N-glycosylation. N-glycosylation occurs cotranslationally and the complex associates with the Sec61 complex at the channel-forming translocon complex that mediates protein translocation across the endoplasmic reticulum (ER). All subunits are required for a maximal enzyme activity. In Gallus gallus (Chicken), this protein is Oligosaccharyltransferase complex subunit OSTC.